The sequence spans 963 residues: Aminopeptidase N (963 aa).

At 2 to 8 (AKGFYIS) the chain is on the cytoplasmic side. The helical; Signal-anchor for type II membrane protein transmembrane segment at 9-32 (KALGILGILLGVAAVATIIALSVV) threads the bilayer. The interval 33 to 64 (YAQEKNKNAEHVPQAPTSPTITTTAAITLDQS) is cytosolic Ser/Thr-rich junction. At 33 to 963 (YAQEKNKNAE…VVLNWFIEHS (931 aa)) the chain is on the extracellular side. The tract at residues 65-963 (KPWNRYRLPT…VVLNWFIEHS (899 aa)) is metalloprotease. Residues N82 and N124 are each glycosylated (N-linked (GlcNAc...) asparagine). Sulfotyrosine is present on Y171. Residues N229, N237, N258, N286, N314, and N328 are each glycosylated (N-linked (GlcNAc...) asparagine). 347–351 (GAMEN) is a substrate binding site. H383 is a Zn(2+) binding site. The active-site Proton acceptor is E384. Residues H387 and E406 each contribute to the Zn(2+) site. 6 N-linked (GlcNAc...) asparagine glycosylation sites follow: N506, N556, N569, N622, N646, and N736. The interval 717–813 (KYLRKQVEPL…DQWDFAWGQL (97 aa)) is interaction with TGEV spike glycoprotein. Cystine bridges form between C758/C765 and C795/C831.

Belongs to the peptidase M1 family. Homodimer. Interacts with SLC6A19. As to quaternary structure, (Microbial infection) Interacts with TGEV and PRCoV spike glycoprotein. It depends on Zn(2+) as a cofactor. Post-translationally, sulfated. In terms of processing, N- and O-glycosylated. May undergo proteolysis and give rise to a soluble form.

It localises to the cell membrane. The catalysed reaction is Release of an N-terminal amino acid, Xaa-|-Yaa- from a peptide, amide or arylamide. Xaa is preferably Ala, but may be most amino acids including Pro (slow action). When a terminal hydrophobic residue is followed by a prolyl residue, the two may be released as an intact Xaa-Pro dipeptide.. Functionally, broad specificity aminopeptidase which plays a role in the final digestion of peptides generated from hydrolysis of proteins by gastric and pancreatic proteases. Also involved in the processing of various peptides including peptide hormones, such as angiotensin III and IV, neuropeptides, and chemokines. May also be involved the cleavage of peptides bound to major histocompatibility complex class II molecules of antigen presenting cells. May have a role in angiogenesis and promote cholesterol crystallization. It is able to degrade Leu-enkephalin and Met-enkephalin but not cholecystokinin CCK8, neuromedin C (GRP-10), somatostatin-14, substance P and vasoactive intestinal peptide. May have a role in amino acid transport by acting as binding partner of amino acid transporter SLC6A19 and regulating its activity. (Microbial infection) In case of porcine transmissible gastroenteritis coronavirus (TGEV) and porcine respiratory coronavirus (PRCoV) infections, serves as a receptor for TGEV and PRCoV spike glycoprotein in a species-specific manner. This chain is Aminopeptidase N (ANPEP), found in Sus scrofa (Pig).